We begin with the raw amino-acid sequence, 167 residues long: Bacterial non-heme ferritin (167 aa).

One can recognise a Ferritin-like diiron domain in the interval Met-1 to Gly-145. 5 residues coordinate Fe cation: Glu-17, Glu-50, His-53, Glu-94, and Gln-127.

Belongs to the ferritin family. Prokaryotic subfamily. Homooligomer of 24 subunits that assemble into a spherical protein shell (12 +/- 1 nM diameter) that can sequester at least 2000 iron atoms.

The protein localises to the cytoplasm. It catalyses the reaction 4 Fe(2+) + O2 + 6 H2O = 4 iron(III) oxide-hydroxide + 12 H(+). Iron-storage protein. This Helicobacter pylori (strain ATCC 700392 / 26695) (Campylobacter pylori) protein is Bacterial non-heme ferritin (ftnA).